The sequence spans 220 residues: Probable septum site-determining protein MinC (220 aa).

The protein belongs to the MinC family. In terms of assembly, interacts with MinD and FtsZ.

Functionally, cell division inhibitor that blocks the formation of polar Z ring septums. Rapidly oscillates between the poles of the cell to destabilize FtsZ filaments that have formed before they mature into polar Z rings. Prevents FtsZ polymerization. In Vibrio atlanticus (strain LGP32) (Vibrio splendidus (strain Mel32)), this protein is Probable septum site-determining protein MinC.